A 311-amino-acid chain; its full sequence is Metal-staphylopine import system permease protein CntB (311 aa).

6 consecutive transmembrane segments (helical) span residues 9–29, 105–125, 139–159, 173–193, 237–257, and 274–294; these read IALM…LTYI, LTII…VVSA, VAFF…IIYV, GPES…GIYF, IFCM…YIFA, and FPVI…FNTL. The region spanning 99 to 295 is the ABC transmembrane type-1 domain; that stretch reads FMNTLKLTII…VLFIVFNTLA (197 aa).

It belongs to the binding-protein-dependent transport system permease family. As to quaternary structure, the complex is composed of two ATP-binding proteins (CntD and CntF), two transmembrane proteins (CntB and CntC) and a solute-binding protein (CntA).

The protein localises to the cell membrane. Nickel/cobalt import is reduced in the presence of zinc. Part of the ABC transporter complex CntABCDF (Opp1) involved in the uptake of metal in complex with the metallophore staphylopine (StP). Involved in the import of divalent metals ions such as nickel, cobalt and zinc. Probably responsible for the translocation of the substrate across the membrane. Plays a major role in nickel/cobalt import in zinc-depleted conditions. Contributes to virulence. Required for full urease activity in vitro. In Staphylococcus aureus (strain NCTC 8325 / PS 47), this protein is Metal-staphylopine import system permease protein CntB.